Here is a 254-residue protein sequence, read N- to C-terminus: Type III pantothenate kinase (254 aa).

6–13 serves as a coordination point for ATP; it reads DVGNTNTT. Substrate-binding positions include tyrosine 100 and 107–110; that span reads GADR. Residue aspartate 109 is the Proton acceptor of the active site. K(+) is bound at residue aspartate 129. Threonine 132 is a binding site for ATP. A substrate-binding site is contributed by threonine 184.

Belongs to the type III pantothenate kinase family. In terms of assembly, homodimer. NH4(+) is required as a cofactor. Requires K(+) as cofactor.

It localises to the cytoplasm. The enzyme catalyses (R)-pantothenate + ATP = (R)-4'-phosphopantothenate + ADP + H(+). The protein operates within cofactor biosynthesis; coenzyme A biosynthesis; CoA from (R)-pantothenate: step 1/5. Its function is as follows. Catalyzes the phosphorylation of pantothenate (Pan), the first step in CoA biosynthesis. The sequence is that of Type III pantothenate kinase from Anaeromyxobacter dehalogenans (strain 2CP-1 / ATCC BAA-258).